Here is a 295-residue protein sequence, read N- to C-terminus: F-box protein SKIP24 (295 aa).

The F-box; degenerate domain occupies 19-66 (VKSSTFSYKDLCCISISSRRLFRLSCDDSLWDLLLVHDFPNHIVSASS). 2 coiled-coil regions span residues 82–129 (REKE…SSLQ) and 167–209 (EGRL…ESMK). The tract at residues 217–245 (KSIRNGDQGSNGKTKKLKTSINYSGDQVS) is disordered. The segment covering 235 to 245 (TSINYSGDQVS) has biased composition (polar residues).

Part of a SCF (ASK-cullin-F-box) protein ligase complex. Interacts with SKP1A/ASK1 and SPK1B/ASK2.

The protein operates within protein modification; protein ubiquitination. Functionally, component of SCF(ASK-cullin-F-box) E3 ubiquitin ligase complexes, which may mediate the ubiquitination and subsequent proteasomal degradation of target proteins. In Arabidopsis thaliana (Mouse-ear cress), this protein is F-box protein SKIP24 (SKIP24).